Consider the following 191-residue polypeptide: Molybdenum cofactor guanylyltransferase (191 aa).

GTP is bound by residues 11-13 (LCG), lysine 23, aspartate 66, and aspartate 97. Aspartate 97 lines the Mg(2+) pocket.

This sequence belongs to the MobA family. As to quaternary structure, monomer. Mg(2+) serves as cofactor.

It localises to the cytoplasm. It carries out the reaction Mo-molybdopterin + GTP + H(+) = Mo-molybdopterin guanine dinucleotide + diphosphate. Its function is as follows. Transfers a GMP moiety from GTP to Mo-molybdopterin (Mo-MPT) cofactor (Moco or molybdenum cofactor) to form Mo-molybdopterin guanine dinucleotide (Mo-MGD) cofactor. The protein is Molybdenum cofactor guanylyltransferase of Campylobacter jejuni subsp. doylei (strain ATCC BAA-1458 / RM4099 / 269.97).